A 216-amino-acid chain; its full sequence is Nudix hydrolase 26, chloroplastic (216 aa).

The N-terminal 53 residues, 1–53, are a transit peptide targeting the chloroplast; the sequence is MALYRPLLLHHPTSPSVTTFLRNYPSKPIKFSSLPFLHRCRKSRVSSSSARCC. The 148-residue stretch at 62–209 folds into the Nudix hydrolase domain; sequence GYRRNVGVCL…KKPVYKEVMS (148 aa). The short motif at 95–116 is the Nudix box element; it reads GGIDEGEDPRVAVMRELKEETG. Positions 110 and 114 each coordinate Mn(2+).

The protein belongs to the Nudix hydrolase family. Mg(2+) is required as a cofactor. Mn(2+) serves as cofactor. In terms of tissue distribution, expressed in roots, leaves, stems and inflorescences.

The protein localises to the plastid. It is found in the chloroplast. Functionally, mediates the hydrolysis of some nucleoside diphosphate derivatives. Can use diadenosine 5',5'''-P(1)P(5) pentaphosphate (Ap(5)A), diadenosine 5',5'''-P(1)P(4) tetraphosphate (Ap(4)A) and diadenosine 5',5'''-P(1)P(3) triphosphate (Ap(3)A) as substrates. The protein is Nudix hydrolase 26, chloroplastic (NUDT26) of Arabidopsis thaliana (Mouse-ear cress).